We begin with the raw amino-acid sequence, 212 residues long: Large ribosomal subunit protein uL3 (212 aa).

The segment at 136–155 (THGNSLSHRSNGSIGQNQTP) is disordered. N5-methylglutamine is present on Gln-153.

Belongs to the universal ribosomal protein uL3 family. Part of the 50S ribosomal subunit. Forms a cluster with proteins L14 and L19. Methylated by PrmB.

One of the primary rRNA binding proteins, it binds directly near the 3'-end of the 23S rRNA, where it nucleates assembly of the 50S subunit. This Shewanella oneidensis (strain ATCC 700550 / JCM 31522 / CIP 106686 / LMG 19005 / NCIMB 14063 / MR-1) protein is Large ribosomal subunit protein uL3.